Consider the following 168-residue polypeptide: uncharacterized protein (168 aa).

The N-terminal stretch at 1 to 21 (MVYEVLAVVSGGLLGFGVTWA) is a signal peptide.

This is an uncharacterized protein from Archaeoglobus fulgidus (strain ATCC 49558 / DSM 4304 / JCM 9628 / NBRC 100126 / VC-16).